The chain runs to 726 residues: Dipeptidyl-peptidase 5 (726 aa).

The first 19 residues, 1 to 19 (MAAAKWLIASLAFASSGLA), serve as a signal peptide directing secretion. 2 N-linked (GlcNAc...) asparagine glycosylation sites follow: asparagine 96 and asparagine 252. Positions 269–291 (AEPINKRNGPRTPQAIEGASSSP) are disordered. Catalysis depends on serine 558, which acts as the Charge relay system. N-linked (GlcNAc...) asparagine glycosylation occurs at asparagine 605. Catalysis depends on charge relay system residues aspartate 641 and histidine 673. An N-linked (GlcNAc...) asparagine glycan is attached at asparagine 699.

Belongs to the peptidase S9C family.

It localises to the secreted. Its function is as follows. Extracellular dipeptidyl-peptidase which removes N-terminal dipeptides sequentially from polypeptides having unsubstituted N-termini. Contributes to pathogenicity. The chain is Dipeptidyl-peptidase 5 (DPP5) from Trichophyton equinum (Horse ringworm fungus).